The primary structure comprises 1136 residues: MGISRNRLVPGLVGLAASAAIVLPLGIGMPVSSATAEENAPVQTLNVDYGTTTGDFYGGSSGMLYGLGDEGSPTDAILDGARVQVTSQKPADGLQHPSADVLAVENQFFNNGGEELVVNLQDWYPDWSYNGGKRPGDTRSYKLDVDPNDAQYGTYTDNAPNDRWDFDEVLEVVMNKILANTSHPDNIVFMPFNEPDGGNWYASGDNASADIYKQFLTDWNDAYATIQKVWNQYKSGEKTNVNGVKPTADHALIAGPGDSVWRANRTKALLESSKAANTLPDVIVWHELGNGSLKNYRSHYNQYRSFEQELGITPRAINISEFGELRDMSVPGQLIQWMSMFESTKVQAQTAYWNYAGNLNDNMARANSANGGWWLYKWYGDLRGTQTVKVTSEHPDSVDNLQGVAAIDTKNRKATVLYGGANDATKIGANIPVTVHMTGLDQSVFGESVDVQVRENAYTGPDGVAATPRVVNVLSDQKLVNGTLDVTTTSIDRYAGYQLVVTPHQDVATSLDNAENGRSLQAIEAEDTTLSDGAKAYTKSDNTGSWGNFMFSGNGDVGNFKNGAKMTWNVDVPADGAYRLQLITAPAGFPGVNHVYVDGKSVGDLNVPAELALKEAAKWKYRGSAEIVLDGLTKGKHAITVEATDLDNESDKLLLYQVSRGDGTPVDQVTYPASDMRLDSGAVLAYDGNGTNGFANLNGGRADVFAHAWEAGYQNVTIAYNAAKGAHFVLSVNGQSAATVTAQSDGAQTSIVRVAFSEGINQLTLSGAAGVRVASVTTARASESDSKAIRFEAEDAQLSGGAKVQKDDASDASGKSFVAGLGNQFVTNESGKAGYGDQTRVEADANHVPTVAQNNKGTMTVTGVPAGAYNMVVRFSNDAFIGSHSYNPQVVDLGLQVREGDQEIARGSFRYTYTEKHFMNRSVTVTTHGGALTLGNWDEVGSRKAAVSWGVAPNVDSITFYPITDGNVIDSVSGVTVSGEGVSADGKASLKVGETLSLNASVTPDSVADKTVQWTSSDEQVATVDEHGVVKGVKAGTVTITATSVADSSRSGSVEVTVAEDSEQKPSGGDGDNNGEQTGKPDGNTGGQTSDSDAGADSGNNQKHMPLTGAAVAAVAGVAVLLAGAGLLLKRLRSRS.

The signal sequence occupies residues 1-36 (MGISRNRLVPGLVGLAASAAIVLPLGIGMPVSSATA). Glu-194 (proton donor) is an active-site residue. Glu-321 acts as the Nucleophile in catalysis. 2 CBM6 domains span residues 521–656 (QAIE…LLLY) and 669–779 (VTYP…VTTA). The region spanning 987–1045 (KASLKVGETLSLNASVTPDSVADKTVQWTSSDEQVATVDEHGVVKGVKAGTVTITATSV) is the BIG2 domain. Positions 1049–1104 (SRSGSVEVTVAEDSEQKPSGGDGDNNGEQTGKPDGNTGGQTSDSDAGADSGNNQKH) are disordered. Residues 1087 to 1103 (GQTSDSDAGADSGNNQK) show a composition bias toward polar residues. A helical membrane pass occupies residues 1109 to 1129 (GAAVAAVAGVAVLLAGAGLLL).

Belongs to the glycosyl hydrolase 39 family.

The protein localises to the cell membrane. The protein resides in the secreted. It is found in the cell wall. The enzyme catalyses Hydrolysis of alpha-D-Galp-(1-&gt;3)-L-Araf disaccharides from non-reducing terminals in branches of type II arabinogalactan attached to proteins.. In terms of biological role, hydrolase involved in the degradation of the gum arabic arabinogalactan protein (AGP). Catalyzes the release of 3-O-alpha-D-galactopyranosyl-L-arabinose (alpha-D-Galp-(1-&gt;3)-L-Ara) from gum arabic AGP. Can also release 3-O-beta-L-arabinopyranosyl-L-arabinose (beta-L-Arap-(1-&gt;3)-L-Ara) from gum arabic AGP and larch AGP, but the alpha-D-Galp-(1-&gt;3)-L-Ara release activity is 594-fold higher than the beta-L-Arap-(1-&gt;3)-L-Ara release activity. Exhibits no reactivity toward p-nitrophenyl (pNP)-alpha-Araf or any other tested pNP substrate. Plays a crucial role in gum arabic AGP assimilation in B.longum. The protein is 3-O-alpha-D-galactosyl-alpha-L-arabinofuranosidase of Bifidobacterium longum subsp. longum.